The sequence spans 308 residues: Putative S-adenosyl-L-methionine-dependent methyltransferase Mjls_1073 (308 aa).

S-adenosyl-L-methionine contacts are provided by residues Asp-133 and 162–163; that span reads DL.

This sequence belongs to the UPF0677 family.

Functionally, exhibits S-adenosyl-L-methionine-dependent methyltransferase activity. The protein is Putative S-adenosyl-L-methionine-dependent methyltransferase Mjls_1073 of Mycobacterium sp. (strain JLS).